The following is a 708-amino-acid chain: Ion-translocating oxidoreductase complex subunit C (708 aa).

4Fe-4S ferredoxin-type domains are found at residues 369–397 (GEPQ…QQLY) and 407–436 (KATT…VQYF). The [4Fe-4S] cluster site is built by Cys-377, Cys-380, Cys-383, Cys-387, Cys-416, Cys-419, Cys-422, and Cys-426. Positions 663 to 684 (KARKLEQQQTNAEPEEQVDPRK) are disordered.

Belongs to the 4Fe4S bacterial-type ferredoxin family. RnfC subfamily. As to quaternary structure, the complex is composed of six subunits: RsxA, RsxB, RsxC, RsxD, RsxE and RsxG. It depends on [4Fe-4S] cluster as a cofactor.

It is found in the cell inner membrane. Its function is as follows. Part of a membrane-bound complex that couples electron transfer with translocation of ions across the membrane. Required to maintain the reduced state of SoxR. This is Ion-translocating oxidoreductase complex subunit C from Shigella boydii serotype 18 (strain CDC 3083-94 / BS512).